We begin with the raw amino-acid sequence, 255 residues long: F-box only protein 44 (255 aa).

Residues 3–50 (VGNINELPENILLELFTHVPARQLLLNCRLVCSLWRDLIDLVTLWKRK) form the F-box domain. The region spanning 71–252 (FYFLRSLHRN…VTNSSITIGP (182 aa)) is the FBA domain.

In terms of assembly, part of a SCF (SKP1-cullin-F-box) protein ligase complex. Interacts with SKP1 and CUL1. Abundantly expressed in brain and kidney. Expressed at lower levels in heart, spleen and liver.

Functionally, substrate-recognition component of the SCF (SKP1-CUL1-F-box protein)-type E3 ubiquitin ligase complex. This chain is F-box only protein 44 (FBXO44), found in Homo sapiens (Human).